The primary structure comprises 1064 residues: MDDYHVNTAFSMGRGNQQDDGNSESNSMHTQPSTMAPATLRMMGKSPQQQQQQNTPLMPPADIKYANNGNSHQAEQKERQVELEGKSRENAPKPNTTSQSRVSSSQGMPKQFHRKSLGDWEFVETVGAGSMGKVKLAKHRYTNEVCAVKIVNRATKAFLHKEQMLPPPKNEQDVLERQKKLEKEISRDKRTIREASLGQILYHPHICRLFEMCTLSNHFYMLFEYVSGGQLLDYIIQHGSIREHQARKFARGIASALIYLHANNIVHRDLKIENIMISDSSEIKIIDFGLSNIYDSRKQLHTFCGSLYFAAPELLKANPYTGPEVDVWSFGVVLFVLVCGKVPFDDENSSVLHEKIKQGKVEYPQHLSIEVISLLSKMLVVDPKRRATLKQVVEHHWMVRGFNGPPPSYLPKRVPLTIEMLDINVLKEMYRLEFIDDVEETRSVLVSIITDPTYVLLSRQYWTLAAKMNAESSDNGNAPNITESFEDPTRAYHPMISIYYLTSEMLDRKHAKIRNQQQRQSHENIEKLSEIPESVKQRDVEVNTTAMKSEPEATLATKDTSVPFTPKNSDGTEPPLHVLIPPRLAMPEQAHTSPTSRKSSDNQRREMEYALSPTPQGNDYQQFRVPSTTGDPSEKAKFGNIFRKLSQRRKKTIEQTSVNSNNSINKPVQKTHSRAVSDFVPGFAKPSYDSNYTMNEPVKTNDSRGGNKGDFPALPADAENMVEKQREKQIEEDIMKLHDINKQNNEVAKGSGREAYAAQKFEGSDDDENHPLPPLNVAKGRKLHPSARAKSVGHARRESLKYMRPPMPSSAYPQQELIDTGFLESSDDNKSDSLGNVTSQTNDSVSVHSVNAHINSPSVEKELTDEEILQEASRAPAGSMPSIDFPRSLFLKGFFSVQTTSSKPLPIVRYKIMFVLRKMNIEFKEVKGGFVCMQRFSSNNVAAKREGTPRSIMPLSHHESIRRQGSNKYSPSSPLTTNSIHQRKTSITETYGDDKHSGTSLENIHQQGDGSEGMTTTEKEPIKFEIHIVKVRIVGLAGVHFKKISGNTWLYKELASSILKELKL.

Residues 1-113 (MDDYHVNTAF…SSQGMPKQFH (113 aa)) are disordered. The segment covering 8–36 (TAFSMGRGNQQDDGNSESNSMHTQPSTMA) has biased composition (polar residues). Basic and acidic residues predominate over residues 74–91 (AEQKERQVELEGKSRENA). Residues 93 to 108 (KPNTTSQSRVSSSQGM) are compositionally biased toward polar residues. The 279-residue stretch at 120 to 398 (WEFVETVGAG…LKQVVEHHWM (279 aa)) folds into the Protein kinase domain. Residues 126–134 (VGAGSMGKV) and K149 contribute to the ATP site. D269 serves as the catalytic Proton acceptor. At S534 the chain carries Phosphoserine. A disordered region spans residues 549-621 (SEPEATLATK…SPTPQGNDYQ (73 aa)). A compositionally biased stretch (polar residues) spans 557–571 (TKDTSVPFTPKNSDG). S593 carries the phosphoserine modification. Residues 598–608 (KSSDNQRREME) show a composition bias toward basic and acidic residues. The residue at position 646 (S646) is a Phosphoserine. 5 disordered regions span residues 652-672 (TIEQ…QKTH), 694-714 (MNEP…FPAL), 762-797 (EGSD…HARR), 823-843 (LESS…QTND), and 958-1016 (HESI…GMTT). Positions 654–670 (EQTSVNSNNSINKPVQK) are enriched in polar residues. S764 is modified (phosphoserine). Positions 779-794 (KGRKLHPSARAKSVGH) are enriched in basic residues. Composition is skewed to polar residues over residues 832–843 (DSLGNVTSQTND), 963–989 (RQGS…SITE), and 998–1016 (GTSL…GMTT). Residue S986 is modified to Phosphoserine. The 50-residue stretch at 1015-1064 (TTTEKEPIKFEIHIVKVRIVGLAGVHFKKISGNTWLYKELASSILKELKL) folds into the KA1 domain.

The protein belongs to the protein kinase superfamily. CAMK Ser/Thr protein kinase family. NIM1 subfamily. Interacts with SEC9 and SRO7. In terms of processing, autophosphorylated.

The protein resides in the cytoplasm. It is found in the cell membrane. The catalysed reaction is L-seryl-[protein] + ATP = O-phospho-L-seryl-[protein] + ADP + H(+). The enzyme catalyses L-threonyl-[protein] + ATP = O-phospho-L-threonyl-[protein] + ADP + H(+). In terms of biological role, serine/threonine protein kinase involved in the regulation of exocytosis. Induces phosphorylation of SEC9 and its release from the plasma membrane to the cytosol. This Saccharomyces cerevisiae (strain ATCC 204508 / S288c) (Baker's yeast) protein is Serine/threonine protein kinase KIN1 (KIN1).